The following is a 122-amino-acid chain: Large ribosomal subunit protein bL19c (122 aa).

The protein belongs to the bacterial ribosomal protein bL19 family.

Its subcellular location is the plastid. The protein localises to the chloroplast. The sequence is that of Large ribosomal subunit protein bL19c (rpl19) from Rhodomonas salina (Cryptomonas salina).